Reading from the N-terminus, the 242-residue chain is MKRAKKAKKEKKESTPLPFPYLASIVLLPWWISLSFKKCFEPWVTHWCNTRQSKFFLNDIQEKGTLERFIELEELFLLDKIIKEYYPDTHIQRLWIRIHKETIQLVKIHNEDHNHIIFCLSTNIISFTILSGYSILGNEELFILNSWVQEFLYNLSDTIKAFSILLFTDLCIGFHSPHGWELMIGSIYKIFGFAHNDQVISGFVSTFPVFLDTFFKYLIFRHLNRVSPSLVVIYDSINEELI.

A run of 2 helical transmembrane segments spans residues 116–136 (IIFC…YSIL) and 200–220 (ISGF…YLIF).

The protein belongs to the CemA family.

The protein resides in the plastid. Its subcellular location is the chloroplast inner membrane. The enzyme catalyses K(+)(in) + H(+)(out) = K(+)(out) + H(+)(in). Contributes to K(+)/H(+) antiport activity by supporting proton efflux to control proton extrusion and homeostasis in chloroplasts in a light-dependent manner to modulate photosynthesis. Prevents excessive induction of non-photochemical quenching (NPQ) under continuous-light conditions. Indirectly promotes efficient inorganic carbon uptake into chloroplasts. In Chloranthus spicatus (Chulantree), this protein is Potassium/proton antiporter CemA.